Reading from the N-terminus, the 357-residue chain is Protein ORF58 (357 aa).

11 consecutive transmembrane segments (helical) span residues 20-40 (LAATPFLWCFIFKALYSFTLF), 44-64 (ITAVFFWSLPVTHLALICMCL), 78-98 (WICASAVFAAVVCAAFSGFTF), 101-121 (VPFIPGLCVLNCLLLLPYPLA), 132-152 (IVHRYYELGFCGAFMVYYLLL), 157-177 (FVSGVFWLPFIVFLVGGLLAF), 219-239 (VVVFVTLLLATLISTASIGLL), 242-262 (VLIGLDKYMTLFYVGLLSCVG), 270-290 (ALFVLLPLAAVLLTLVHILGS), 300-320 (CLCCLFLVSMLAAMGVEIQLI), and 333-353 (MVLALCTVGNLCISCLLSVIN).

It belongs to the herpesviridae BMRF2 family.

The protein resides in the virion membrane. It is found in the host cell membrane. Participates in rearrangement of cellular actin to increase intercellular contacts and thereby promotes virus cell-to-cell spreadin$g. The polypeptide is Protein ORF58 (ORF58) (Homo sapiens (Human)).